A 100-amino-acid chain; its full sequence is MHVCDLQKLVRIQLAFTTFPWMFSCHLLPTPELSSKRNQCLLYKTSGCLTQMPILYGHPATLLKDYILQAILQPGKKIQGGTEIQRGSFANQYQTDASHL.

This is an uncharacterized protein from Homo sapiens (Human).